The following is a 291-amino-acid chain: Bifunctional protein FolD (291 aa).

Residues 168–170 (GRG), Thr-195, and Ile-236 each bind NADP(+).

Belongs to the tetrahydrofolate dehydrogenase/cyclohydrolase family. Homodimer.

The enzyme catalyses (6R)-5,10-methylene-5,6,7,8-tetrahydrofolate + NADP(+) = (6R)-5,10-methenyltetrahydrofolate + NADPH. It catalyses the reaction (6R)-5,10-methenyltetrahydrofolate + H2O = (6R)-10-formyltetrahydrofolate + H(+). Its pathway is one-carbon metabolism; tetrahydrofolate interconversion. Its function is as follows. Catalyzes the oxidation of 5,10-methylenetetrahydrofolate to 5,10-methenyltetrahydrofolate and then the hydrolysis of 5,10-methenyltetrahydrofolate to 10-formyltetrahydrofolate. This chain is Bifunctional protein FolD, found in Bifidobacterium longum subsp. infantis (strain ATCC 15697 / DSM 20088 / JCM 1222 / NCTC 11817 / S12).